The following is a 120-amino-acid chain: Large ribosomal subunit protein uL18 (120 aa).

Belongs to the universal ribosomal protein uL18 family. As to quaternary structure, part of the 50S ribosomal subunit; part of the 5S rRNA/L5/L18/L25 subcomplex. Contacts the 5S and 23S rRNAs.

In terms of biological role, this is one of the proteins that bind and probably mediate the attachment of the 5S RNA into the large ribosomal subunit, where it forms part of the central protuberance. In Bartonella henselae (strain ATCC 49882 / DSM 28221 / CCUG 30454 / Houston 1) (Rochalimaea henselae), this protein is Large ribosomal subunit protein uL18.